Consider the following 184-residue polypeptide: dITP/XTP pyrophosphatase (184 aa).

8-13 (TGNKGK) lines the substrate pocket. Mg(2+) is bound by residues glutamate 37 and aspartate 66. Aspartate 66 serves as the catalytic Proton acceptor. Substrate contacts are provided by residues serine 67, 142 to 145 (FGYD), lysine 163, and 168 to 169 (HR).

This sequence belongs to the HAM1 NTPase family. Homodimer. The cofactor is Mg(2+).

It carries out the reaction XTP + H2O = XMP + diphosphate + H(+). The catalysed reaction is dITP + H2O = dIMP + diphosphate + H(+). The enzyme catalyses ITP + H2O = IMP + diphosphate + H(+). In terms of biological role, pyrophosphatase that catalyzes the hydrolysis of nucleoside triphosphates to their monophosphate derivatives, with a high preference for the non-canonical purine nucleotides XTP (xanthosine triphosphate), dITP (deoxyinosine triphosphate) and ITP. Seems to function as a house-cleaning enzyme that removes non-canonical purine nucleotides from the nucleotide pool, thus preventing their incorporation into DNA/RNA and avoiding chromosomal lesions. This chain is dITP/XTP pyrophosphatase, found in Methanosarcina mazei (strain ATCC BAA-159 / DSM 3647 / Goe1 / Go1 / JCM 11833 / OCM 88) (Methanosarcina frisia).